The primary structure comprises 1437 residues: CRISPR-associated endoribonuclease Cas13a (1437 aa).

HEPN-like fold stretches follow at residues 460-626 and 1101-1437; these read LNAS…AMFE and EFRD…QLKN. The disordered stretch occupies residues 1377–1419; the sequence is EVKEKKKPSDNNTGKGYSKRDRQQDRKEYDKYKEKKKKEGNFL. The span at 1394-1416 shows a compositional bias: basic and acidic residues; the sequence is SKRDRQQDRKEYDKYKEKKKKEG.

This sequence belongs to the CRISPR-associated endoribonuclease Cas13a family. It depends on a divalent metal cation as a cofactor.

With respect to regulation, target RNA acts as an activator for non-specific ssRNA degradation. In terms of biological role, CRISPR (clustered regularly interspaced short palindromic repeat), is an adaptive immune system that provides protection against mobile genetic elements (viruses, transposable elements and conjugative plasmids). CRISPR clusters contain sequences complementary to antecedent mobile elements and target invading nucleic acids. Unlike many single-component effectors, this CRISPR-Cas system targets RNA. CRISPR clusters are transcribed from pre-CRISPR RNA (crRNA) and processed into crRNA by this protein. Cleaves linear target ssRNA in a pre-crRNA-dependent fashion, preferentially around A residues. Binding a viable target RNA target activates this protein for non-specific RNA degradation in vitro (called collateral RNA degradation), but it is not very sensitive as it requires nanomolar levels of viable target RNA. The polypeptide is CRISPR-associated endoribonuclease Cas13a (Lachnospiraceae bacterium (strain NK4A179)).